We begin with the raw amino-acid sequence, 160 residues long: Eosinophil cationic protein (160 aa).

A signal peptide spans 1–27; it reads MVPKLFTPQICLLLLLGLMGVEGSLHA. Residues 28–72 are required for nearly all of the bactericidal activities; partially involved in LPS-binding; it reads RPPQFTKAQWFAIQHINVNPPRCTIAMRVINNYQRRCKNQNTFLR. The active-site Proton acceptor is the H42. 4 disulfides stabilise this stretch: C50/C110, C64/C123, C82/C138, and C89/C98. Residue Y60 is modified to 3'-nitrotyrosine. 65-69 is a substrate binding site; sequence KNQNT. N-linked (GlcNAc...) asparagine glycans are attached at residues N84, N92, and N119. H155 acts as the Proton donor in catalysis.

This sequence belongs to the pancreatic ribonuclease family. Interacts with bacterial lipopolysaccharide (LPS) and lipoteichoic acid (LTA). In vitro interacts with phospholipid bilayers.

Its subcellular location is the secreted. Its function is as follows. Cytotoxin and helminthotoxin with low-efficiency ribonuclease activity. Possesses a wide variety of biological activities. Exhibits antibacterial activity. The sequence is that of Eosinophil cationic protein (RNASE3) from Macaca nemestrina (Pig-tailed macaque).